A 268-amino-acid chain; its full sequence is Putative ABC transporter ATP-binding protein MK0182 (268 aa).

An ABC transporter domain is found at 1-229 (MTHEYPDGTC…VDLIRESGLK (229 aa)). Position 29–36 (29–36 (GPNGSGKT)) interacts with ATP.

It belongs to the ABC transporter superfamily.

It localises to the cell membrane. Functionally, probably part of an ABC transporter complex. Responsible for energy coupling to the transport system. The protein is Putative ABC transporter ATP-binding protein MK0182 of Methanopyrus kandleri (strain AV19 / DSM 6324 / JCM 9639 / NBRC 100938).